We begin with the raw amino-acid sequence, 259 residues long: Global transcriptional regulator CodY (259 aa).

The tract at residues 1-155 is GAF domain; sequence MELLAKTRKL…SSTVVGMEIL (155 aa). The H-T-H motif DNA-binding region spans 203–222; sequence ASKIADRVGITRSVIVNALR. Ser-215 is subject to Phosphoserine.

This sequence belongs to the CodY family.

The protein localises to the cytoplasm. Functionally, DNA-binding global transcriptional regulator which is involved in the adaptive response to starvation and acts by directly or indirectly controlling the expression of numerous genes in response to nutrient availability. During rapid exponential growth, CodY is highly active and represses genes whose products allow adaptation to nutrient depletion. The chain is Global transcriptional regulator CodY from Bacillus cereus (strain B4264).